Here is a 288-residue protein sequence, read N- to C-terminus: Ice-binding protein (288 aa).

The N-terminal stretch at 1–22 is a signal peptide; it reads MFSTTLINTFSLGLLAVVSVVA. Short sequence motifs (ice-binding site motif (T-A/G-X-T/N)) lie at residues 75 to 78 and 154 to 157; these read TAGN and TAFN. An N-linked (GlcNAc...) asparagine glycan is attached at asparagine 194. 2 short sequence motifs (ice-binding site motif (T-A/G-X-T/N)) span residues 196-199 and 265-268; these read TGVT and TGAT.

It belongs to the ice-binding protein family.

It localises to the secreted. In terms of biological role, binds ice crystals and most probably inhibits their growth in order to prevent cell damage from extracellular ice. This Lentinula edodes (Shiitake mushroom) protein is Ice-binding protein.